Reading from the N-terminus, the 77-residue chain is Small ribosomal subunit protein bS21 (77 aa).

Residues 38 to 52 show a composition bias toward basic and acidic residues; that stretch reads KPSEKRAREKAEAVR. The segment at 38-77 is disordered; sequence KPSEKRAREKAEAVRRTRKLARKRAQREGLISNGRGSPLK. Positions 53-62 are enriched in basic residues; that stretch reads RTRKLARKRA.

It belongs to the bacterial ribosomal protein bS21 family.

This Bartonella henselae (strain ATCC 49882 / DSM 28221 / CCUG 30454 / Houston 1) (Rochalimaea henselae) protein is Small ribosomal subunit protein bS21.